The chain runs to 137 residues: MLSARSAQCMVSMATRSCVSRGSAGSAAAGPVEAAIRAKLEQALSPEVLELRNESGGHAVPAGSETHFRVAVVSSRFEGMSPLQRHRLVHEALSEELAGPVHALAIQAKTPAQWRENPQLDISPPCLGGSKKTRGTS.

Residue S81 is modified to Phosphoserine. The interval 115–137 is disordered; sequence RENPQLDISPPCLGGSKKTRGTS.

It belongs to the BolA/IbaG family. In terms of assembly, interacts with GLRX5.

Its subcellular location is the mitochondrion. In terms of biological role, acts as a mitochondrial iron-sulfur (Fe-S) cluster assembly factor that facilitates (Fe-S) cluster insertion into a subset of mitochondrial proteins. Probably acts together with the monothiol glutaredoxin GLRX5. May protect cells against oxidative stress. The chain is BolA-like protein 1 (Bola1) from Mus musculus (Mouse).